Consider the following 320-residue polypeptide: Protein PR73 (320 aa).

Residues 1–44 (MPRLQQKWLNSRECPTLRGEAAKGLFPTKDDPSAHKRMSPSDKD) lie on the Cytoplasmic side of the membrane. Residues 45–65 (ILILCCKLGIALLCLGLLGEV) form a helical membrane-spanning segment. The Extracellular portion of the chain corresponds to 66–320 (AVRARRALTL…AKTYGMSYYD (255 aa)). Asn-80, Asn-81, Asn-90, Asn-94, Asn-132, and Asn-147 each carry an N-linked (GlcNAc...) asparagine; by host glycan.

It belongs to the mouse mammary tumor virus PR73 superantigen family.

It is found in the membrane. Functionally, superantigen. The chain is Protein PR73 from Mus musculus (Mouse).